Consider the following 309-residue polypeptide: Taste receptor type 2 member 8 (309 aa).

The Extracellular segment spans residues 1-7; sequence MFSPADN. A helical transmembrane segment spans residues 8–28; the sequence is IFIILITGEFILGILGNGYIA. The Cytoplasmic segment spans residues 29–50; sequence LVNWIDWIKKKKISTVDYILTN. A helical transmembrane segment spans residues 51–71; sequence LVIARICLISVMVVNGIVIVL. Over 72–82 the chain is Extracellular; the sequence is NPDVYTKNKQQ. A helical transmembrane segment spans residues 83–103; it reads IVIFTFWTFANYLNMWITTCL. At 104–131 the chain is on the cytoplasmic side; sequence NVFYFLKIASSSHPLFLWLKWKIDMVVH. The chain crosses the membrane as a helical span at residues 132-152; that stretch reads WILLGCFAISLLVSLIAAIVL. Residues 153 to 184 are Extracellular-facing; it reads SCDYRFHAIAKHKRNITEMFXVSKIPYFEPLT. N167 carries an N-linked (GlcNAc...) asparagine glycan. Residues 185–205 form a helical membrane-spanning segment; the sequence is LFNLFAIVPFIVSLISFFLLV. Residues 206–239 are Cytoplasmic-facing; sequence RSLWRHTKQIKLYATGSRDPSTEVHVRAIKTMTS. The helical transmembrane segment at 240–260 threads the bilayer; that stretch reads FIFFFFLYFISSILMTFSYLM. At 261–266 the chain is on the extracellular side; the sequence is TKYKLA. A helical membrane pass occupies residues 267-287; the sequence is VEFGEIAAILYPLGHSLILIV. Residues 288–309 are Cytoplasmic-facing; it reads LNNKLRQIFVRMLTCRKIACVI.

The protein belongs to the G-protein coupled receptor T2R family.

It is found in the membrane. Receptor that may play a role in the perception of bitterness and is gustducin-linked. May play a role in sensing the chemical composition of the gastrointestinal content. The activity of this receptor may stimulate alpha gustducin, mediate PLC-beta-2 activation and lead to the gating of TRPM5. The sequence is that of Taste receptor type 2 member 8 (TAS2R8) from Pan troglodytes (Chimpanzee).